Here is a 207-residue protein sequence, read N- to C-terminus: MLDLSIIAYLLIAICLIALIFGALLGYFSVKLKVEADPIVDQIDAILPQSQCGQCGYPGCKPYAEAIANGDQITKCVPGGQPLVVKIAELMGVDVPSMDNTAVPEVKVALIHEDMCIGCTKCIQACPVDAIIGTNKAMHTVVADLCTGCELCVAPCPTNCIEMIKVKQNPRSWNWQFNPDLIIPIVNTTELQKKMIVGSAKGEIQND.

A hydrophobic region spans residues 1-29 (MLDLSIIAYLLIAICLIALIFGALLGYFS). The 4Fe-4S domain occupies 35–93 (EADPIVDQIDAILPQSQCGQCGYPGCKPYAEAIANGDQITKCVPGGQPLVVKIAELMGV). 12 residues coordinate [4Fe-4S] cluster: Cys-52, Cys-55, Cys-60, Cys-76, Cys-116, Cys-119, Cys-122, Cys-126, Cys-146, Cys-149, Cys-152, and Cys-156. 4Fe-4S ferredoxin-type domains are found at residues 107-136 (KVAL…GTNK) and 137-166 (AMHT…MIKV).

The protein belongs to the 4Fe4S bacterial-type ferredoxin family. RnfB subfamily. The complex is composed of six subunits: RnfA, RnfB, RnfC, RnfD, RnfE and RnfG. [4Fe-4S] cluster serves as cofactor.

The protein localises to the cell inner membrane. In terms of biological role, part of a membrane-bound complex that couples electron transfer with translocation of ions across the membrane. This Haemophilus ducreyi (strain 35000HP / ATCC 700724) protein is Ion-translocating oxidoreductase complex subunit B.